Here is a 221-residue protein sequence, read N- to C-terminus: 7-carboxy-7-deazaguanine synthase (221 aa).

Substrate-binding positions include 12-14 (ING) and arginine 27. Residues 18–216 (KSGQLSVFIR…IQIHKIIWNP (199 aa)) enclose the Radical SAM core domain. Cysteine 31, cysteine 35, and cysteine 38 together coordinate [4Fe-4S] cluster. Threonine 40 lines the Mg(2+) pocket. Threonine 73 contacts substrate. Glycine 75 provides a ligand contact to S-adenosyl-L-methionine.

It belongs to the radical SAM superfamily. 7-carboxy-7-deazaguanine synthase family. As to quaternary structure, homodimer. [4Fe-4S] cluster is required as a cofactor. It depends on S-adenosyl-L-methionine as a cofactor. Mg(2+) serves as cofactor.

It carries out the reaction 6-carboxy-5,6,7,8-tetrahydropterin + H(+) = 7-carboxy-7-deazaguanine + NH4(+). The protein operates within purine metabolism; 7-cyano-7-deazaguanine biosynthesis. Catalyzes the complex heterocyclic radical-mediated conversion of 6-carboxy-5,6,7,8-tetrahydropterin (CPH4) to 7-carboxy-7-deazaguanine (CDG), a step common to the biosynthetic pathways of all 7-deazapurine-containing compounds. The sequence is that of 7-carboxy-7-deazaguanine synthase from Clostridium acetobutylicum (strain ATCC 824 / DSM 792 / JCM 1419 / IAM 19013 / LMG 5710 / NBRC 13948 / NRRL B-527 / VKM B-1787 / 2291 / W).